The following is a 219-amino-acid chain: Ribose-5-phosphate isomerase A (219 aa).

Substrate is bound by residues Ser28–Thr31, Asp81–Asp84, and Lys94–Gly97. The Proton acceptor role is filled by Glu103. Position 121 (Lys121) interacts with substrate.

This sequence belongs to the ribose 5-phosphate isomerase family. As to quaternary structure, homodimer.

The enzyme catalyses aldehydo-D-ribose 5-phosphate = D-ribulose 5-phosphate. Its pathway is carbohydrate degradation; pentose phosphate pathway; D-ribose 5-phosphate from D-ribulose 5-phosphate (non-oxidative stage): step 1/1. Its function is as follows. Catalyzes the reversible conversion of ribose-5-phosphate to ribulose 5-phosphate. This chain is Ribose-5-phosphate isomerase A, found in Mannheimia succiniciproducens (strain KCTC 0769BP / MBEL55E).